Reading from the N-terminus, the 438-residue chain is Thymidine phosphorylase (438 aa).

The protein belongs to the thymidine/pyrimidine-nucleoside phosphorylase family. Homodimer.

It carries out the reaction thymidine + phosphate = 2-deoxy-alpha-D-ribose 1-phosphate + thymine. The protein operates within pyrimidine metabolism; dTMP biosynthesis via salvage pathway; dTMP from thymine: step 1/2. The enzymes which catalyze the reversible phosphorolysis of pyrimidine nucleosides are involved in the degradation of these compounds and in their utilization as carbon and energy sources, or in the rescue of pyrimidine bases for nucleotide synthesis. The protein is Thymidine phosphorylase of Burkholderia orbicola (strain MC0-3).